The sequence spans 843 residues: Protein P (843 aa).

The segment at Met-1–Gln-177 is terminal protein domain (TP). Residues Glu-178 to Leu-346 are spacer. 2 disordered regions span residues Gln-180–Ser-221 and Arg-282–Arg-313. Residues Ser-196 to Ser-221 show a composition bias toward polar residues. The segment at Glu-347–Gln-690 is polymerase/reverse transcriptase domain (RT). Residues Gln-357 to Ile-600 form the Reverse transcriptase domain. Positions 429, 551, and 552 each coordinate Mg(2+).

It belongs to the hepadnaviridae P protein family.

The catalysed reaction is DNA(n) + a 2'-deoxyribonucleoside 5'-triphosphate = DNA(n+1) + diphosphate. The enzyme catalyses Endonucleolytic cleavage to 5'-phosphomonoester.. Its activity is regulated as follows. Activated by host HSP70 and HSP40 in vitro to be able to bind the epsilon loop of the pgRNA. Because deletion of the RNase H region renders the protein partly chaperone-independent, the chaperones may be needed indirectly to relieve occlusion of the RNA-binding site by this domain. Inhibited by several reverse-transcriptase inhibitors: Lamivudine, Adefovir and Entecavir. In terms of biological role, multifunctional enzyme that converts the viral RNA genome into dsDNA in viral cytoplasmic capsids. This enzyme displays a DNA polymerase activity that can copy either DNA or RNA templates, and a ribonuclease H (RNase H) activity that cleaves the RNA strand of RNA-DNA heteroduplexes in a partially processive 3'- to 5'-endonucleasic mode. Neo-synthesized pregenomic RNA (pgRNA) are encapsidated together with the P protein, and reverse-transcribed inside the nucleocapsid. Initiation of reverse-transcription occurs first by binding the epsilon loop on the pgRNA genome, and is initiated by protein priming, thereby the 5'-end of (-)DNA is covalently linked to P protein. Partial (+)DNA is synthesized from the (-)DNA template and generates the relaxed circular DNA (RC-DNA) genome. After budding and infection, the RC-DNA migrates in the nucleus, and is converted into a plasmid-like covalently closed circular DNA (cccDNA). The activity of P protein does not seem to be necessary for cccDNA generation, and is presumably released from (+)DNA by host nuclear DNA repair machinery. This chain is Protein P, found in Homo sapiens (Human).